A 413-amino-acid polypeptide reads, in one-letter code: Serine hydroxymethyltransferase (413 aa).

Residues Leu119 and 123 to 125 contribute to the (6S)-5,6,7,8-tetrahydrofolate site; that span reads GHL. Lys228 carries the post-translational modification N6-(pyridoxal phosphate)lysine. A (6S)-5,6,7,8-tetrahydrofolate-binding site is contributed by 351 to 353; that stretch reads SPF.

It belongs to the SHMT family. In terms of assembly, homodimer. It depends on pyridoxal 5'-phosphate as a cofactor.

It localises to the cytoplasm. It carries out the reaction (6R)-5,10-methylene-5,6,7,8-tetrahydrofolate + glycine + H2O = (6S)-5,6,7,8-tetrahydrofolate + L-serine. It functions in the pathway one-carbon metabolism; tetrahydrofolate interconversion. Its pathway is amino-acid biosynthesis; glycine biosynthesis; glycine from L-serine: step 1/1. Functionally, catalyzes the reversible interconversion of serine and glycine with tetrahydrofolate (THF) serving as the one-carbon carrier. This reaction serves as the major source of one-carbon groups required for the biosynthesis of purines, thymidylate, methionine, and other important biomolecules. Also exhibits THF-independent aldolase activity toward beta-hydroxyamino acids, producing glycine and aldehydes, via a retro-aldol mechanism. The protein is Serine hydroxymethyltransferase of Clostridium botulinum (strain ATCC 19397 / Type A).